Consider the following 170-residue polypeptide: Ribosome maturation factor RimP (170 aa).

The protein belongs to the RimP family.

Its subcellular location is the cytoplasm. Required for maturation of 30S ribosomal subunits. The protein is Ribosome maturation factor RimP of Acidothermus cellulolyticus (strain ATCC 43068 / DSM 8971 / 11B).